The sequence spans 448 residues: MSFPQLGYQYIRPLYPSDRQSVGVTRSGTELSPAGTLSNVLSSVYGAPYAAAAAAQAYGAFLPYSAELPIFPQLGSQYDMKDSPGVQHAAFSHPHPAFYPYGQYQFGDPSRPKNATRESTSTLKAWLNEHRKNPYPTKGEKIMLAIITKMTLTQVSTWFANARRRLKKENKMTWAPRSRTDEEGNAYGSDHEEDKHEDEEEIDLENIDTEDIESKEDLDDPDTDIHSDSKTDTRSDSEVSDGFEDLNVPEDRLLKSVVGQRQLLNEEPQDKCALSSDAKVPQPACEQIKLNRLPPSPPQENNMPVAHKPKIWSLAETATTPDNPRNSPNTGGSVNTQNLIAQHRLIASPGSRFQGWTGRAFSAQQLSLLNSAHFLQGLGVSHTAPCSGNASFPKAAESKCSTNSLTDRPSTVDIEKTIPVLNTAFQPVQRRSQNHLDAAMILSALSSS.

The homeobox; TALE-type DNA-binding region spans 108–170 (DPSRPKNATR…NARRRLKKEN (63 aa)). A disordered region spans residues 171 to 247 (KMTWAPRSRT…EVSDGFEDLN (77 aa)). Over residues 195 to 222 (KHEDEEEIDLENIDTEDIESKEDLDDPD) the composition is skewed to acidic residues. The segment covering 223–237 (TDIHSDSKTDTRSDS) has biased composition (basic and acidic residues). Positions 238–247 (EVSDGFEDLN) are enriched in acidic residues.

It belongs to the TALE/IRO homeobox family. As to expression, primarily expressed in the developing central nervous system (CNS). At gastrula stage, expressed in both the superficial and deep layers of the presumptive neural plate with expression spreading to the prospective hindbrain, spinal cord and midbrain-hindbrain junction as neurulation proceeds. Not expressed in the anterior neural plate and CNS expression in the tadpole excludes the forebrain. Outside of the CNS, expressed around the closing blastopore at early gastrula stages and as gastrulation proceeds, expression switches to the anterior lateral plate mesoderm. In tadpoles, expressed in the ectodermal layer of the branchial arches, and in the otic vesicle. Also expressed in specific and overlapping dynamic patterns with irx1 and irx2 during pronephric kidney development. Renal expression begins before segment-specific terminal differentiation in the pronephric anlage at mid-neurula stage, and is later found in proximal tubule PT3 as well as intermediate tubule segments IT1 and IT2, with expression in the kidney being maintained through to the tadpole stage.

It is found in the nucleus. Its function is as follows. Acts partially redundantly with other irx members in neural patterning. Required for formation of the posterior forebrain, midbrain, hindbrain, and to a lesser extent, spinal cord. Both up-regulates and down-regulates gene expression during neural development. Acts early in neural plate development to induce proneural gene expression and specify a neural precursor state. Also up-regulates repressors that prevent neuronal differentiation. Required during at least two stages of pronephros kidney development; during neurula stages, maintains transcription of key renal genes to define the size and identity of the pronephric anlage, probably in part through regulation of bmp-signaling. Subsequently required for proper formation of the intermediate tubule segment of the pronephros. In Xenopus laevis (African clawed frog), this protein is Iroquois-class homeodomain protein irx-3 (irx3).